The primary structure comprises 1134 residues: Ovochymase-1 (1134 aa).

The first 22 residues, 1 to 22 (MGLLASAGLLLLLVIGHPRSLG), serve as a signal peptide directing secretion. Residues 23 to 46 (LKCGIRMVNMKSKEPAVGSRFFSR) constitute a propeptide, activation peptide. One can recognise a Peptidase S1 1 domain in the interval 38–296 (AVGSRFFSRI…LMDFITQNLF (259 aa)). Asn52 is a glycosylation site (N-linked (GlcNAc...) asparagine). The cysteines at positions 72 and 88 are disulfide-linked. Catalysis depends on His87, which acts as the Charge relay system. Asn99 is a glycosylation site (N-linked (GlcNAc...) asparagine). Glu116 contacts Ca(2+). Residue Asp139 is the Charge relay system of the active site. 3 cysteine pairs are disulfide-bonded: Cys173/Cys243, Cys204/Cys222, and Cys233/Cys262. Ser237 (charge relay system) is an active-site residue. CUB domains follow at residues 284–410 (VSEL…VTAV) and 419–531 (CGSL…FTIL). An N-linked (GlcNAc...) asparagine glycan is attached at Asn324. Cystine bridges form between Cys341/Cys373, Cys419/Cys446, and Cys473/Cys494. The N-linked (GlcNAc...) asparagine glycan is linked to Asn431. Asn507 is a glycosylation site (N-linked (GlcNAc...) asparagine). The 238-residue stretch at 575–812 (IAGGEEACPH…FLDWIQSKIN (238 aa)) folds into the Peptidase S1 2 domain. The cysteines at positions 600 and 616 are disulfide-linked. Active-site charge relay system residues include His615 and Asp664. Disulfide bonds link Cys698/Cys769, Cys729/Cys747, Cys759/Cys788, and Cys846/Cys873. The active-site Charge relay system is Ser763. In terms of domain architecture, CUB 3 spans 846–957 (CSEAELEKPR…GAFGISYIVL (112 aa)). Asn1106 carries N-linked (GlcNAc...) asparagine glycosylation.

The protein belongs to the peptidase S1 family.

Its subcellular location is the secreted. In Homo sapiens (Human), this protein is Ovochymase-1 (OVCH1).